We begin with the raw amino-acid sequence, 446 residues long: Glycogen synthase (446 aa).

Residue Arg-15 coordinates ADP-alpha-D-glucose.

It belongs to the glycosyltransferase 1 family. Bacterial/plant glycogen synthase subfamily.

The catalysed reaction is [(1-&gt;4)-alpha-D-glucosyl](n) + ADP-alpha-D-glucose = [(1-&gt;4)-alpha-D-glucosyl](n+1) + ADP + H(+). The protein operates within glycan biosynthesis; glycogen biosynthesis. In terms of biological role, synthesizes alpha-1,4-glucan chains using ADP-glucose. In Deinococcus deserti (strain DSM 17065 / CIP 109153 / LMG 22923 / VCD115), this protein is Glycogen synthase.